We begin with the raw amino-acid sequence, 513 residues long: Maturase K (513 aa).

This sequence belongs to the intron maturase 2 family. MatK subfamily.

Its subcellular location is the plastid. The protein resides in the chloroplast. Usually encoded in the trnK tRNA gene intron. Probably assists in splicing its own and other chloroplast group II introns. The polypeptide is Maturase K (Phragmites australis (Common reed)).